Consider the following 34-residue polypeptide: MEVNILAFIATALFILIPTAFLLILYVQTASQGS.

A helical transmembrane segment spans residues 5-25; it reads ILAFIATALFILIPTAFLLIL.

Belongs to the PsbM family. PSII is composed of 1 copy each of membrane proteins PsbA, PsbB, PsbC, PsbD, PsbE, PsbF, PsbH, PsbI, PsbJ, PsbK, PsbL, PsbM, PsbT, PsbX, PsbY, PsbZ, Psb30/Ycf12, at least 3 peripheral proteins of the oxygen-evolving complex and a large number of cofactors. It forms dimeric complexes.

It is found in the plastid. The protein localises to the chloroplast thylakoid membrane. One of the components of the core complex of photosystem II (PSII). PSII is a light-driven water:plastoquinone oxidoreductase that uses light energy to abstract electrons from H(2)O, generating O(2) and a proton gradient subsequently used for ATP formation. It consists of a core antenna complex that captures photons, and an electron transfer chain that converts photonic excitation into a charge separation. This subunit is found at the monomer-monomer interface. The polypeptide is Photosystem II reaction center protein M (Anthoceros angustus (Hornwort)).